A 209-amino-acid polypeptide reads, in one-letter code: NDR1/HIN1-like protein 1 (209 aa).

The helical transmembrane segment at 18-38 (IFWSIIFVLFIIFLTILLIWA) threads the bilayer. Residue asparagine 58 is glycosylated (N-linked (GlcNAc...) asparagine).

Expressed in rosette leaves, cauline leaves, stems, and siliques, and at lower levels in roots and flowers.

Its subcellular location is the cell membrane. May play a role in plant immunity. In Arabidopsis thaliana (Mouse-ear cress), this protein is NDR1/HIN1-like protein 1.